A 421-amino-acid chain; its full sequence is Synaptotagmin-12 (421 aa).

Residues 1-18 (MAVDVTEYHLSVIKSPPG) lie on the Vesicular side of the membrane. A helical membrane pass occupies residues 19–39 (WEVGVYAAGALALLGIAAVSL). Residues 40–421 (WKLWTSGSFP…VSMWHPVRRN (382 aa)) lie on the Cytoplasmic side of the membrane. The residue at position 97 (serine 97) is a Phosphoserine; by PKA. Residues serine 99 and serine 214 each carry the phosphoserine modification. C2 domains follow at residues 152–272 (TLGQ…SGWL) and 283–416 (AVGE…SMWH).

Belongs to the synaptotagmin family. Homodimer. Can also form heterodimers. Interacts with SYT1. Post-translationally, phosphorylation of Ser-97 is required for mossy-fiber long-term potentiation. In terms of tissue distribution, expressed in the brain, specifically in neurons of the cerebellum, cortex, hippocampus, olfactory bulb, brainstem and spinal cord (at protein level).

It is found in the cytoplasmic vesicle. The protein resides in the secretory vesicle. The protein localises to the synaptic vesicle membrane. In terms of biological role, synaptic vesicle phosphoprotein that enhances spontaneous neurotransmitter release but does not effect induced neurotransmitter release. Unlike other synaptotagmins, it does not bind Ca(2+) or phospholipids. Essential for mossy-fiber long-term potentiation in the hippocampus. The polypeptide is Synaptotagmin-12 (Rattus norvegicus (Rat)).